The following is a 309-amino-acid chain: Probable inactive poly [ADP-ribose] polymerase SRO5 (309 aa).

In terms of domain architecture, PARP catalytic spans 28-255; that stretch reads CDSSSDRSFA…AFPVLIKALS (228 aa). Residues 238-309 enclose the RST domain; the sequence is KRLRSPWMAF…IKACGHKVQH (72 aa).

Interacts with dehydration-responsive DREB2 proteins and a number of transcription factors belonging to several protein families.

The protein resides in the nucleus matrix. Functionally, probable inactive ADP-ribosyltransferase that may be involved in stress and developmental responses. This chain is Probable inactive poly [ADP-ribose] polymerase SRO5 (SRO5), found in Arabidopsis thaliana (Mouse-ear cress).